Reading from the N-terminus, the 711-residue chain is MFNETKKSIEWGEETLTLETGKVARQADGSVIATLGETSVMANVTFAKKQKPGQDFFPLTVHYQEKYYAAGKVPGGFFKREARPTEKETLTARLIDRPLRPLFVPGFKNEVLVMCTVLSHDLVNDPDMVAMIAASAALTISGAPFMGPIAGARVGFEDGEYILNPTVDDMQDLRLNPEQRLDLVVAGTKDAVMMVESEAYELSEAEMLGAVKFAHDAIQPVLDLIIDLAEDCAKEPFDFSPPDYSELSAAVKAAGETEMRAAFAISDKQERTTAVAAARETIMAALSDEQKEDPNLGSAMKGLEASILRGDVVKTGKRIDGRKTDEIRDIVCETGLLPRTHGSALFTRGETQGLVVTTLGTGDDEQFIDALHGNFKSNFLLHYNFPPYSVGEAGRVGPPGRREIGHGKLAWRALQAVLPAATDFPYTVRVVSEITESNGSSSMASVCGGSLSMMDAGVPLKAPVAGVAMGLILEEDGSYAILSDILGDEDHLGDMDFKVAGTEAGITSLQMDIKIAGITPEIMEKALEQAKAGRIHILGEMAKSITGAQDFSIHAPRIETMQIPTDKIREVIGSGGKVIREIVEVSGAKVDINDEGIIKIASPNGEAIKKAYDMIHSIVAEPEEGMVYTGTVVKIVDFGAFVNFFGKRDGLVHVSQIENRRLNHPSDVLKEGQEVKVKLLGFDDRGKVRLSMKVVDQETGEEIKKEEAPAD.

Residues aspartate 490 and aspartate 496 each contribute to the Mg(2+) site. One can recognise a KH domain in the interval 556-615; it reads PRIETMQIPTDKIREVIGSGGKVIREIVEVSGAKVDINDEGIIKIASPNGEAIKKAYDMI. Positions 625-693 constitute an S1 motif domain; it reads GMVYTGTVVK…DRGKVRLSMK (69 aa).

Belongs to the polyribonucleotide nucleotidyltransferase family. It depends on Mg(2+) as a cofactor.

It localises to the cytoplasm. The catalysed reaction is RNA(n+1) + phosphate = RNA(n) + a ribonucleoside 5'-diphosphate. Functionally, involved in mRNA degradation. Catalyzes the phosphorolysis of single-stranded polyribonucleotides processively in the 3'- to 5'-direction. In Roseobacter denitrificans (strain ATCC 33942 / OCh 114) (Erythrobacter sp. (strain OCh 114)), this protein is Polyribonucleotide nucleotidyltransferase.